Reading from the N-terminus, the 158-residue chain is Transcription elongation factor GreA (158 aa).

It belongs to the GreA/GreB family.

Functionally, necessary for efficient RNA polymerase transcription elongation past template-encoded arresting sites. The arresting sites in DNA have the property of trapping a certain fraction of elongating RNA polymerases that pass through, resulting in locked ternary complexes. Cleavage of the nascent transcript by cleavage factors such as GreA or GreB allows the resumption of elongation from the new 3'terminus. GreA releases sequences of 2 to 3 nucleotides. In Psychrobacter cryohalolentis (strain ATCC BAA-1226 / DSM 17306 / VKM B-2378 / K5), this protein is Transcription elongation factor GreA.